Here is a 644-residue protein sequence, read N- to C-terminus: Chaperone protein HtpG (644 aa).

Residues 1–352 (MNARVEQLEF…AQDMSLNVSR (352 aa)) form an a; substrate-binding region. The tract at residues 353–566 (EILQQDRQIK…AFGITPALAR (214 aa)) is b. A c region spans residues 567 to 644 (LYRASGQDIP…ILADRLARTL (78 aa)).

It belongs to the heat shock protein 90 family. Homodimer.

It is found in the cytoplasm. Functionally, molecular chaperone. Has ATPase activity. In Mycolicibacterium paratuberculosis (strain ATCC BAA-968 / K-10) (Mycobacterium paratuberculosis), this protein is Chaperone protein HtpG.